Here is a 151-residue protein sequence, read N- to C-terminus: Transcriptional regulator MraZ (151 aa).

2 consecutive SpoVT-AbrB domains span residues A5–E51 and A81–Q124.

It belongs to the MraZ family. As to quaternary structure, forms oligomers.

It localises to the cytoplasm. The protein resides in the nucleoid. The sequence is that of Transcriptional regulator MraZ from Neisseria meningitidis serogroup C / serotype 2a (strain ATCC 700532 / DSM 15464 / FAM18).